The sequence spans 350 residues: Nicotinate-nucleotide--dimethylbenzimidazole phosphoribosyltransferase (350 aa).

The active-site Proton acceptor is the E316.

The protein belongs to the CobT family.

It carries out the reaction 5,6-dimethylbenzimidazole + nicotinate beta-D-ribonucleotide = alpha-ribazole 5'-phosphate + nicotinate + H(+). It participates in nucleoside biosynthesis; alpha-ribazole biosynthesis; alpha-ribazole from 5,6-dimethylbenzimidazole: step 1/2. Functionally, catalyzes the synthesis of alpha-ribazole-5'-phosphate from nicotinate mononucleotide (NAMN) and 5,6-dimethylbenzimidazole (DMB). The polypeptide is Nicotinate-nucleotide--dimethylbenzimidazole phosphoribosyltransferase (Pseudomonas syringae pv. tomato (strain ATCC BAA-871 / DC3000)).